The chain runs to 688 residues: Phosphatidylinositol 4-phosphate 5-kinase type-1 gamma (688 aa).

The interval 48–71 is disordered; sequence GQPGPGHGKKLGHRGVDASGETTY. Positions 75 to 443 constitute a PIPK domain; sequence TSSTLKGAIQ…RFFKFMSSTV (369 aa). N6-acetyllysine is present on residues lysine 265 and lysine 268. An Asymmetric dimethylarginine; alternate modification is found at arginine 459. Position 459 is an omega-N-methylarginine; alternate (arginine 459). Residues 525 to 534 are compositionally biased toward low complexity; sequence TTLSSTSLSI. Disordered regions lie at residues 525–565 and 592–629; these read TTLS…QEEL and GAGV…EEDA. Serine 554 is subject to Phosphoserine. A compositionally biased stretch (low complexity) spans 602-623; the sequence is ASAAATVEVDAASQASEPASQA. Tyrosine 635 is modified (phosphotyrosine; by EGFR). A Phosphotyrosine; by CSK modification is found at tyrosine 671. Serine 672 is modified (phosphoserine; by CDK5, MAPK1 and CDK1). Serine 682 and serine 686 each carry phosphoserine. Threonine 688 bears the Phosphothreonine mark.

As to quaternary structure, interacts with TLN1. Interacts with TLN2; interaction stimulates 1-phosphatidylinositol-4-phosphate 5-kinase activity. May compete with beta-integrins for the same binding site on TLN1 and TLN2. Interacts with ARF6; interaction stimulates 1-phosphatidylinositol-4-phosphate 5-kinase activity. Interacts with AP2B1. Interacts with AP2M1; phosphorylation of PIP5K1C by CSK disrupts the interaction; clathrin competes with PIP5K1C. Interacts with CDH1. Interacts with CSK. Interacts with PLCG1; interaction is abolished upon EGF stimulation. Interacts with LAPTM4B; promotes SNX5 association with LAPTM4B; kinase activity of PIP5K1C is required; interaction is regulated by phosphatidylinositol 4,5-bisphosphate generated by PIP5K1C. In terms of processing, phosphorylation on Ser-672 negatively regulates binding to TLN2 and is strongly stimulated in mitosis. Phosphorylation on Tyr-671 is necessary for targeting to focal adhesions. Phosphorylation on Ser-672 and Tyr-671 are mutually exclusive. Phosphorylated by SYK and CSK. Tyrosine phosphorylation is enhanced by PTK2 signaling. Phosphorylated at Tyr-635 upon EGF stimulation. Some studies suggest that phosphorylation on Tyr-671 enhances binding to tailins (TLN1 and TLN2); others that phosphorylation at Tyr-671 does not directly enhance binding to tailins (TLN1 and TLN2) but may act indirectly by inhibiting phosphorylation at Ser-672. Acetylation at Lys-265 and Lys-268 seems to decrease lipid kinase activity. Deacetylation of these sites by SIRT1 positively regulates the exocytosis of TSH-containing granules from pituitary cells.

The protein localises to the cell membrane. Its subcellular location is the endomembrane system. It is found in the cytoplasm. The protein resides in the cell junction. It localises to the focal adhesion. The protein localises to the adherens junction. Its subcellular location is the cell projection. It is found in the ruffle membrane. The protein resides in the phagocytic cup. It localises to the uropodium. It carries out the reaction a 1,2-diacyl-sn-glycero-3-phospho-(1D-myo-inositol 4-phosphate) + ATP = a 1,2-diacyl-sn-glycero-3-phospho-(1D-myo-inositol-4,5-bisphosphate) + ADP + H(+). The catalysed reaction is 1-octadecanoyl-2-(5Z,8Z,11Z,14Z)-eicosatetraenoyl-sn-glycero-3-phospho-1D-myo-inositol 4-phosphate + ATP = 1-octadecanoyl-2-(5Z,8Z,11Z,14Z)-eicosatetraenoyl-sn-glycero-3-phospho-1D-myo-inositol 4,5-bisphosphate + ADP + H(+). It catalyses the reaction 1-octadecanoyl-2-(9Z)-octadecenoyl-sn-glycero-3-phospho-1D-myo-inositol 4-phosphate + ATP = 1-octadecanoyl-2-(9Z)-octadecenoyl-sn-glycero-3-phospho-1D-myo-inositol 4,5-bisphosphate + ADP + H(+). The enzyme catalyses 1-octadecanoyl-2-(9Z)-octadecenoyl-sn-glycero-3-phospho-1D-myo-inositol + ATP = 1-octadecanoyl-2-(9Z)-octadecenoyl-sn-glycero-3-phospho-1D-myo-inositol 5-phosphate + ADP + H(+). It carries out the reaction 1-octadecanoyl-2-(9Z,12Z)-octadecadienoyl-sn-glycero-3-phospho-1D-myo-inositol + ATP = 1-octadecanoyl-2-(9Z,12Z)-octadecadienoyl-sn-glycero-3-phospho-1D-myo-inositol 5-phosphate + ADP + H(+). The catalysed reaction is 1-octadecanoyl-2-(5Z,8Z,11Z,14Z-eicosatetraenoyl)-sn-glycero-3-phospho-(1D-myo-inositol) + ATP = 1-octadecanoyl-2-(5Z,8Z,11Z,14Z)-eicosatetraenoyl-sn-glycero-3-phospho-1D-myo-inositol 5-phosphate + ADP + H(+). It catalyses the reaction 1,2-di-(9Z,12Z)-octadecadienoyl-sn-glycero-3-phospho-1D-myo-inositol + ATP = 1,2-di(9Z,12Z)-octadecadienoyl-sn-glycero-3-phospho-1D-myo-inositol 5-phosphate + ADP + H(+). In terms of biological role, catalyzes the phosphorylation of phosphatidylinositol 4-phosphate (PtdIns(4)P/PI4P) to form phosphatidylinositol 4,5-bisphosphate (PtdIns(4,5)P2/PIP2), a lipid second messenger that regulates several cellular processes such as signal transduction, vesicle trafficking, actin cytoskeleton dynamics, cell adhesion, and cell motility. PtdIns(4,5)P2 can directly act as a second messenger or can be utilized as a precursor to generate other second messengers: inositol 1,4,5-trisphosphate (IP3), diacylglycerol (DAG) or phosphatidylinositol-3,4,5-trisphosphate (PtdIns(3,4,5)P3/PIP3). PIP5K1A-mediated phosphorylation of PtdIns(4)P is the predominant pathway for PtdIns(4,5)P2 synthesis. Together with PIP5K1A, is required for phagocytosis, both enzymes regulating different types of actin remodeling at sequential steps. Promotes particle attachment by generating the pool of PtdIns(4,5)P2 that induces controlled actin depolymerization to facilitate Fc-gamma-R clustering. Mediates RAC1-dependent reorganization of actin filaments. Required for synaptic vesicle transport. Controls the plasma membrane pool of PtdIns(4,5)P2 implicated in synaptic vesicle endocytosis and exocytosis. Plays a role in endocytosis mediated by clathrin and AP-2 (adaptor protein complex 2). Required for clathrin-coated pits assembly at the synapse. Participates in cell junction assembly. Modulates adherens junctions formation by facilitating CDH1/cadherin trafficking. Required for focal adhesion dynamics. Modulates the targeting of talins (TLN1 and TLN2) to the plasma membrane and their efficient assembly into focal adhesions. Regulates the interaction between talins (TLN1 and TLN2) and beta-integrins. Required for uropodium formation and retraction of the cell rear during directed migration. Has a role in growth factor-stimulated directional cell migration and adhesion. Required for talin assembly into nascent adhesions forming at the leading edge toward the direction of the growth factor. Negative regulator of T-cell activation and adhesion. Negatively regulates integrin alpha-L/beta-2 (LFA-1) polarization and adhesion induced by T-cell receptor. Together with PIP5K1A has a role during embryogenesis and together with PIP5K1B may have a role immediately after birth. The protein is Phosphatidylinositol 4-phosphate 5-kinase type-1 gamma of Rattus norvegicus (Rat).